Reading from the N-terminus, the 152-residue chain is Protein eva-1 homolog A (152 aa).

Residues 1–60 form a necessary for the localization and biological activity region; sequence MRLPLSHSPEHVEMALLSNILAAYSFVSENPERAALYFVSGVCIGLVLTLAALVIRISCH. A helical membrane pass occupies residues 35 to 55; the sequence is ALYFVSGVCIGLVLTLAALVI. The interval 70–97 is disordered; that stretch reads KFLQDRESSSDSSDSEDGSEDTVSDLSV. Residues 82 to 92 are compositionally biased toward acidic residues; the sequence is SDSEDGSEDTV. Thr106 is modified (phosphothreonine). Residue Ser114 is modified to Phosphoserine; by FAM20C.

This sequence belongs to the EVA1 family. As to expression, expressed in lung, kidney, liver, pancreas, placenta, but not in heart and skeletal muscle.

The protein localises to the endoplasmic reticulum membrane. It is found in the lysosome membrane. In terms of biological role, acts as a regulator of programmed cell death, mediating both autophagy and apoptosis. The sequence is that of Protein eva-1 homolog A (EVA1A) from Homo sapiens (Human).